The chain runs to 199 residues: Peroxiredoxin 2 (199 aa).

The 159-residue stretch at 8 to 166 (AFIGQPAPNF…TLRLIQAFQF (159 aa)) folds into the Thioredoxin domain. The active-site Cysteine sulfenic acid (-SOH) intermediate is the cysteine 53.

This sequence belongs to the peroxiredoxin family. AhpC/Prx1 subfamily. Homodimer; disulfide-linked, upon oxidation.

The enzyme catalyses a hydroperoxide + [thioredoxin]-dithiol = an alcohol + [thioredoxin]-disulfide + H2O. Thiol-specific peroxidase that catalyzes the reduction of hydrogen peroxide and organic hydroperoxides to water and alcohols, respectively. Plays a role in cell protection against oxidative stress by detoxifying peroxides and as sensor of hydrogen peroxide-mediated signaling events. The chain is Peroxiredoxin 2 (tsa-2) from Brugia malayi (Filarial nematode worm).